A 132-amino-acid chain; its full sequence is D-ribose pyranase (132 aa).

Residue histidine 20 is the Proton donor of the active site. Substrate contacts are provided by residues aspartate 28, histidine 98, and 121-123 (YSN).

Belongs to the RbsD / FucU family. RbsD subfamily. In terms of assembly, homodecamer.

It is found in the cytoplasm. It catalyses the reaction beta-D-ribopyranose = beta-D-ribofuranose. Its pathway is carbohydrate metabolism; D-ribose degradation; D-ribose 5-phosphate from beta-D-ribopyranose: step 1/2. Catalyzes the interconversion of beta-pyran and beta-furan forms of D-ribose. The protein is D-ribose pyranase of Kosmotoga olearia (strain ATCC BAA-1733 / DSM 21960 / TBF 19.5.1).